A 273-amino-acid polypeptide reads, in one-letter code: 4-hydroxy-tetrahydrodipicolinate reductase (273 aa).

Residue 12-17 (GAAGRM) coordinates NAD(+). Arg-39 contacts NADP(+). NAD(+) is bound by residues 102-104 (GTT) and 126-129 (AANF). His-159 functions as the Proton donor/acceptor in the catalytic mechanism. Residue His-160 participates in (S)-2,3,4,5-tetrahydrodipicolinate binding. The active-site Proton donor is the Lys-163. 169–170 (GT) is a binding site for (S)-2,3,4,5-tetrahydrodipicolinate.

The protein belongs to the DapB family. In terms of assembly, homotetramer.

The protein localises to the cytoplasm. It catalyses the reaction (S)-2,3,4,5-tetrahydrodipicolinate + NAD(+) + H2O = (2S,4S)-4-hydroxy-2,3,4,5-tetrahydrodipicolinate + NADH + H(+). It carries out the reaction (S)-2,3,4,5-tetrahydrodipicolinate + NADP(+) + H2O = (2S,4S)-4-hydroxy-2,3,4,5-tetrahydrodipicolinate + NADPH + H(+). It functions in the pathway amino-acid biosynthesis; L-lysine biosynthesis via DAP pathway; (S)-tetrahydrodipicolinate from L-aspartate: step 4/4. Functionally, catalyzes the conversion of 4-hydroxy-tetrahydrodipicolinate (HTPA) to tetrahydrodipicolinate. This is 4-hydroxy-tetrahydrodipicolinate reductase from Erwinia tasmaniensis (strain DSM 17950 / CFBP 7177 / CIP 109463 / NCPPB 4357 / Et1/99).